Consider the following 40-residue polypeptide: Photosystem II reaction center protein J (40 aa).

A helical membrane pass occupies residues 8–28 (IPLWIIGTVTGILVIGLIGIF).

It belongs to the PsbJ family. As to quaternary structure, PSII is composed of 1 copy each of membrane proteins PsbA, PsbB, PsbC, PsbD, PsbE, PsbF, PsbH, PsbI, PsbJ, PsbK, PsbL, PsbM, PsbT, PsbX, PsbY, PsbZ, Psb30/Ycf12, at least 3 peripheral proteins of the oxygen-evolving complex and a large number of cofactors. It forms dimeric complexes.

The protein localises to the plastid. The protein resides in the chloroplast thylakoid membrane. Its function is as follows. One of the components of the core complex of photosystem II (PSII). PSII is a light-driven water:plastoquinone oxidoreductase that uses light energy to abstract electrons from H(2)O, generating O(2) and a proton gradient subsequently used for ATP formation. It consists of a core antenna complex that captures photons, and an electron transfer chain that converts photonic excitation into a charge separation. This is Photosystem II reaction center protein J from Eucalyptus globulus subsp. globulus (Tasmanian blue gum).